We begin with the raw amino-acid sequence, 326 residues long: tRNA-cytidine(32) 2-sulfurtransferase (326 aa).

The PP-loop motif motif lies at 63 to 68 (SGGKDS). [4Fe-4S] cluster-binding residues include Cys-138, Cys-141, and Cys-229.

It belongs to the TtcA family. As to quaternary structure, homodimer. Requires Mg(2+) as cofactor. The cofactor is [4Fe-4S] cluster.

It is found in the cytoplasm. It catalyses the reaction cytidine(32) in tRNA + S-sulfanyl-L-cysteinyl-[cysteine desulfurase] + AH2 + ATP = 2-thiocytidine(32) in tRNA + L-cysteinyl-[cysteine desulfurase] + A + AMP + diphosphate + H(+). It functions in the pathway tRNA modification. Functionally, catalyzes the ATP-dependent 2-thiolation of cytidine in position 32 of tRNA, to form 2-thiocytidine (s(2)C32). The sulfur atoms are provided by the cysteine/cysteine desulfurase (IscS) system. The chain is tRNA-cytidine(32) 2-sulfurtransferase from Leptothrix cholodnii (strain ATCC 51168 / LMG 8142 / SP-6) (Leptothrix discophora (strain SP-6)).